A 298-amino-acid polypeptide reads, in one-letter code: Factor-induced gene 1 protein (298 aa).

Transmembrane regions (helical) follow at residues 17-37, 163-183, 195-215, and 243-263; these read IFALAFNLISIFLLIFLLIGC, VLMATVILTILMFLFILYVTV, FLLLLSSTIVLTWGIGAMWTH, and VMAWFSFAFLLLDSVVLWLIF. Serine 288 is subject to Phosphoserine. Threonine 293 is modified (phosphothreonine). The residue at position 296 (serine 296) is a Phosphoserine.

The protein resides in the membrane. Functionally, required for efficient mating. This chain is Factor-induced gene 1 protein (FIG1), found in Saccharomyces cerevisiae (strain ATCC 204508 / S288c) (Baker's yeast).